The chain runs to 541 residues: 2-hydroxyacylsphingosine 1-beta-galactosyltransferase (541 aa).

The N-terminal stretch at 1 to 20 (MKSYTPYFMLLWSAVGIARA) is a signal peptide. N-linked (GlcNAc...) asparagine glycans are attached at residues asparagine 78, asparagine 333, and asparagine 442. A helical transmembrane segment spans residues 472–492 (YFLLDIAFVLLLGAVALYFIV).

The protein belongs to the UDP-glycosyltransferase family. In terms of tissue distribution, brain, restricted to the oligodendrocyte-containing cell layers of cerebrum and cerebellum.

It localises to the membrane. Its subcellular location is the endoplasmic reticulum. The catalysed reaction is an N-acylsphing-4-enine + UDP-alpha-D-galactose = a beta-D-galactosyl-(1&lt;-&gt;1')-N-acylsphing-4-enine + UDP + H(+). It catalyses the reaction N-(2-hydroxy-hexanoyl)-sphing-4-enine + UDP-alpha-D-galactose = N-(2-hydroxy-hexanoyl)-beta-D-galactosyl-sphing-4-enine + UDP + H(+). The enzyme catalyses N-(2-hydroxy-hexanoyl)-sphinganine + UDP-alpha-D-galactose = N-(2-hydroxyhexanoyl)-beta-D-galactosylsphinganine + UDP + H(+). It carries out the reaction an N-acyl-sphingoid base + UDP-alpha-D-galactose = a D-galactosylceramide + UDP + H(+). Its pathway is sphingolipid metabolism; galactosylceramide biosynthesis. Functionally, catalyzes the transfer of galactose to ceramide, a key enzymatic step in the biosynthesis of galactocerebrosides, which are abundant sphingolipids of the myelin membrane of the central nervous system and peripheral nervous system. Galactosylates both hydroxy- and non-hydroxy fatty acid-containing ceramides and diglycerides. The polypeptide is 2-hydroxyacylsphingosine 1-beta-galactosyltransferase (Rattus norvegicus (Rat)).